Here is an 81-residue protein sequence, read N- to C-terminus: Cytochrome b559 subunit alpha (81 aa).

The helical transmembrane segment at 21–35 (VIHSITIPMLFIAGW) threads the bilayer. A heme-binding site is contributed by H23.

This sequence belongs to the PsbE/PsbF family. Heterodimer of an alpha subunit and a beta subunit. PSII is composed of 1 copy each of membrane proteins PsbA, PsbB, PsbC, PsbD, PsbE, PsbF, PsbH, PsbI, PsbJ, PsbK, PsbL, PsbM, PsbT, PsbX, PsbY, PsbZ, Psb30/Ycf12, peripheral proteins PsbO, CyanoQ (PsbQ), PsbU, PsbV and a large number of cofactors. It forms dimeric complexes. Requires heme b as cofactor.

Its subcellular location is the cellular thylakoid membrane. Its function is as follows. This b-type cytochrome is tightly associated with the reaction center of photosystem II (PSII). PSII is a light-driven water:plastoquinone oxidoreductase that uses light energy to abstract electrons from H(2)O, generating O(2) and a proton gradient subsequently used for ATP formation. It consists of a core antenna complex that captures photons, and an electron transfer chain that converts photonic excitation into a charge separation. This is Cytochrome b559 subunit alpha from Picosynechococcus sp. (strain ATCC 27264 / PCC 7002 / PR-6) (Agmenellum quadruplicatum).